Consider the following 274-residue polypeptide: tRNA pseudouridine synthase A (274 aa).

Residue D60 is the Nucleophile of the active site. Position 118 (Y118) interacts with substrate.

This sequence belongs to the tRNA pseudouridine synthase TruA family. As to quaternary structure, homodimer.

It catalyses the reaction uridine(38/39/40) in tRNA = pseudouridine(38/39/40) in tRNA. Functionally, formation of pseudouridine at positions 38, 39 and 40 in the anticodon stem and loop of transfer RNAs. The chain is tRNA pseudouridine synthase A from Picosynechococcus sp. (strain ATCC 27264 / PCC 7002 / PR-6) (Agmenellum quadruplicatum).